Consider the following 304-residue polypeptide: Cell surface-binding protein OPG105 (304 aa).

An Alpha-carbonic anhydrase domain is found at 1–235 (MPQQLSPINI…NDDTQVYYSG (235 aa)). Over 1 to 275 (MPQQLSPINI…YQKYIEGNKT (275 aa)) the chain is Virion surface. A helical transmembrane segment spans residues 276–294 (FAIIAIVFVFILTAILFLM). Residues 295-304 (SQRYSREKQN) lie on the Intravirion side of the membrane.

It belongs to the alpha-carbonic anhydrase family. In terms of assembly, homodimer; disulfide-linked. In terms of processing, apparently non-glycosylated.

It localises to the virion membrane. In terms of biological role, binds to chondroitin sulfate on the cell surface to provide virion attachment to target cell. The protein is Cell surface-binding protein OPG105 (OPG105) of Monkeypox virus (strain Zaire-96-I-16) (MPX).